We begin with the raw amino-acid sequence, 171 residues long: Adenine phosphoribosyltransferase (171 aa).

Belongs to the purine/pyrimidine phosphoribosyltransferase family. As to quaternary structure, homodimer.

It is found in the cytoplasm. It carries out the reaction AMP + diphosphate = 5-phospho-alpha-D-ribose 1-diphosphate + adenine. It participates in purine metabolism; AMP biosynthesis via salvage pathway; AMP from adenine: step 1/1. In terms of biological role, catalyzes a salvage reaction resulting in the formation of AMP, that is energically less costly than de novo synthesis. This is Adenine phosphoribosyltransferase from Geotalea daltonii (strain DSM 22248 / JCM 15807 / FRC-32) (Geobacter daltonii).